The following is a 589-amino-acid chain: Ubiquilin-1 (589 aa).

Gly residues predominate over residues 1–11 (MAESGESGGPP). 2 disordered regions span residues 1–35 (MAESGESGGPPGSQDSAAGAEGAGAPAAAASAEPK) and 110–145 (NRPQDHSAQQTNTAGSNVTTSSTPNSNSTSGSATSN). Alanine 2 is subject to N-acetylalanine. Low complexity predominate over residues 12–35 (GSQDSAAGAEGAGAPAAAASAEPK). Positions 37-111 (MKVTVKTPKE…VHLVIKTQNR (75 aa)) constitute a Ubiquitin-like domain. Residues 110–124 (NRPQDHSAQQTNTAG) show a composition bias toward polar residues. Residues 125-145 (SNVTTSSTPNSNSTSGSATSN) show a composition bias toward low complexity. The interaction with UBXN4 stretch occupies residues 178–428 (QLLSNPEMMV…LNNPLFAGNP (251 aa)). STI1 domains are found at residues 182–210 (NPEMMVQIMENPFVQSMLSNPDLMRQLIM) and 212–251 (NPQMQQLIQRNPEISHMLNNPDIMRQTLELARNPAMMQEM). Positions 295 to 371 (PFASLVSNTS…NLVPGVGASM (77 aa)) are disordered. Positions 299–313 (LVSNTSSGEGSQPSR) are enriched in polar residues. Residues 327–360 (QTSQSSSASSGTASTVGGTTGSTASGTSGQSTTA) are compositionally biased toward low complexity. STI1 domains are found at residues 387 to 434 (NPQL…QEQM) and 438 to 470 (LPTFLQQMQNPDTLSAMSNPRAMQALLQIQQGL). Positions 488–520 (LGALGSTGGSSGTNGSNATPSENTSPTAGTTEP) are disordered. The span at 489–499 (GALGSTGGSSG) shows a compositional bias: gly residues. The segment covering 509 to 520 (ENTSPTAGTTEP) has biased composition (polar residues). In terms of domain architecture, UBA spans 546–586 (RFQQQLEQPSAMGFLNREANLQALIATGGDINAAIERLLGS).

As to quaternary structure, monomer and homodimer. Heterodimer with UBQLN2. Binds CD47, NBL1, GABRA1, GABRA2, GABRA3, GABRA6, GABRB1, GABRB2 and GABRB3. Binds UBE3A, BTRC, P4HB and MTOR. Interacts with the proteasome 19S subunit. Interacts (via ubiquitin-like domain) with TREX1; the interaction is direct and may control TREX1 subcellular location. Forms a complex with UBXN4 and VCP. Interacts (via UBA domain) with UBQLN4 (via ubiquitin-like domain). Found in a complex with UBQLN2 and MAP1LC3A/B/C. The monomeric form interacts with PSEN1 and PSEN2. Interacts with ORAI1. Interacts (via UBA domain) with TICAM1. Interacts with EPS15. Interacts (via UBA domain) with UBA52 and (via ubiquitin-like domain) with PSMD3 and PSMD4. Interacts with HERPUD1. Interacts with MAP1LC3A/B/C in the presence of UBQLN4. Interacts (via ubiquitin-like domain) with EPS15 (via UIM domains) and both the ubiquitinated and non-ubiquitinated forms can interact with EPS15. Interacts (via ubiquitin-like domain) with EPS15L1, HGS (via UIM domain) and STAM2 (via UIM domain). Interacts with BCL2L10/BCL-B; in the cytoplasm. In terms of processing, degraded during both macroautophagy and during chaperone-mediated autophagy (CMA). Post-translationally, phosphorylated. Ubiquitinated.

The protein resides in the nucleus. It is found in the cytoplasm. Its subcellular location is the endoplasmic reticulum. It localises to the cytoplasmic vesicle. The protein localises to the autophagosome. The protein resides in the cell membrane. Its function is as follows. Plays an important role in the regulation of different protein degradation mechanisms and pathways including ubiquitin-proteasome system (UPS), autophagy and endoplasmic reticulum-associated protein degradation (ERAD) pathway. Mediates the proteasomal targeting of misfolded or accumulated proteins for degradation by binding (via UBA domain) to their polyubiquitin chains and by interacting (via ubiquitin-like domain) with the subunits of the proteasome. Plays a role in the ERAD pathway via its interaction with ER-localized proteins UBXN4, VCP and HERPUD1 and may form a link between the polyubiquitinated ERAD substrates and the proteasome. Plays a role in unfolded protein response (UPR) by attenuating the induction of UPR-inducible genes, DDTI3/CHOP, HSPA5 and PDIA2 during ER stress. Involved in the regulation of macroautophagy and autophagosome formation; required for maturation of autophagy-related protein LC3 from the cytosolic form LC3-I to the membrane-bound form LC3-II and may assist in the maturation of autophagosomes to autolysosomes by mediating autophagosome-lysosome fusion. Negatively regulates the TICAM1/TRIF-dependent toll-like receptor signaling pathway by decreasing the abundance of TICAM1 via the autophagic pathway. Promotes the ubiquitination and lysosomal degradation of ORAI1, consequently down-regulating the ORAI1-mediated Ca2+ mobilization. Suppresses the maturation and proteasomal degradation of amyloid beta A4 protein (A4) by stimulating the lysine 63 (K63)-linked polyubiquitination. Delays the maturation of A4 by sequestering it in the Golgi apparatus and preventing its transport to the cell surface for subsequent processing. Ubiquitinates BCL2L10 and thereby stabilizes protein abundance. This Pongo abelii (Sumatran orangutan) protein is Ubiquilin-1 (UBQLN1).